Consider the following 513-residue polypeptide: Cytochrome P450 1A2 (513 aa).

Ser68 carries an O-linked (GlcNAc) serine glycan. Residue Phe225 coordinates substrate. Cys456 is a heme binding site.

It belongs to the cytochrome P450 family. In terms of assembly, interacts with PGRMC1; the interaction requires PGRMC1 homodimerization. Heme serves as cofactor.

Its subcellular location is the endoplasmic reticulum membrane. The protein localises to the microsome membrane. The catalysed reaction is an organic molecule + reduced [NADPH--hemoprotein reductase] + O2 = an alcohol + oxidized [NADPH--hemoprotein reductase] + H2O + H(+). It carries out the reaction 17beta-estradiol + reduced [NADPH--hemoprotein reductase] + O2 = 2-hydroxy-17beta-estradiol + oxidized [NADPH--hemoprotein reductase] + H2O + H(+). The enzyme catalyses 17beta-estradiol + reduced [NADPH--hemoprotein reductase] + O2 = 4-hydroxy-17beta-estradiol + oxidized [NADPH--hemoprotein reductase] + H2O + H(+). It catalyses the reaction estrone + reduced [NADPH--hemoprotein reductase] + O2 = 2-hydroxyestrone + oxidized [NADPH--hemoprotein reductase] + H2O + H(+). The catalysed reaction is estrone + reduced [NADPH--hemoprotein reductase] + O2 = 4-hydroxyestrone + oxidized [NADPH--hemoprotein reductase] + H2O + H(+). It carries out the reaction cholesterol + reduced [NADPH--hemoprotein reductase] + O2 = 25-hydroxycholesterol + oxidized [NADPH--hemoprotein reductase] + H2O + H(+). The enzyme catalyses all-trans-retinol + reduced [NADPH--hemoprotein reductase] + O2 = all-trans-retinal + oxidized [NADPH--hemoprotein reductase] + 2 H2O + H(+). It catalyses the reaction all-trans-retinal + reduced [NADPH--hemoprotein reductase] + O2 = all-trans-retinoate + oxidized [NADPH--hemoprotein reductase] + H2O + 2 H(+). The catalysed reaction is (5Z,8Z,11Z,14Z)-eicosatetraenoate + reduced [NADPH--hemoprotein reductase] + O2 = (14R,15S)-epoxy-(5Z,8Z,11Z)-eicosatrienoate + oxidized [NADPH--hemoprotein reductase] + H2O + H(+). It carries out the reaction (5Z,8Z,11Z,14Z)-eicosatetraenoate + reduced [NADPH--hemoprotein reductase] + O2 = (14S,15R)-epoxy-(5Z,8Z,11Z)-eicosatrienoate + oxidized [NADPH--hemoprotein reductase] + H2O + H(+). The enzyme catalyses (5Z,8Z,11Z,14Z,17Z)-eicosapentaenoate + reduced [NADPH--hemoprotein reductase] + O2 = (17R,18S)-epoxy-(5Z,8Z,11Z,14Z)-eicosatetraenoate + oxidized [NADPH--hemoprotein reductase] + H2O + H(+). It catalyses the reaction (4Z,7Z,10Z,13Z,16Z,19Z)-docosahexaenoate + reduced [NADPH--hemoprotein reductase] + O2 = (19R,20S)-epoxy-(4Z,7Z,10Z,13Z,16Z)-docosapentaenoate + oxidized [NADPH--hemoprotein reductase] + H2O + H(+). The catalysed reaction is (5S)-hydroperoxy-(6E,8Z,11Z,14Z)-eicosatetraenoate = 5-oxo-(6E,8Z,11Z,14Z)-eicosatetraenoate + H2O. It carries out the reaction (12S)-hydroperoxy-(5Z,8Z,10E,14Z)-eicosatetraenoate = 12-oxo-(5Z,8Z,10E,14Z)-eicosatetraenoate + H2O. The enzyme catalyses (15S)-hydroperoxy-(5Z,8Z,11Z,13E)-eicosatetraenoate = 15-oxo-(5Z,8Z,11Z,13E)-eicosatetraenoate + H2O. It catalyses the reaction (13S)-hydroperoxy-(9Z,11E)-octadecadienoate = 13-oxo-(9Z,11E)-octadecadienoate + H2O. The catalysed reaction is (5Z,8Z,11Z,14Z)-eicosatetraenoate + reduced [NADPH--hemoprotein reductase] + O2 = 13-hydroxy-(5Z,8Z,11Z,14Z)-eicosatetraenoate + oxidized [NADPH--hemoprotein reductase] + H2O + H(+). It carries out the reaction (5Z,8Z,11Z,14Z)-eicosatetraenoate + reduced [NADPH--hemoprotein reductase] + O2 = 19-hydroxy-(5Z,8Z,11Z,14Z)-eicosatetraenoate + oxidized [NADPH--hemoprotein reductase] + H2O + H(+). The enzyme catalyses (9Z,12Z)-octadecadienoate + reduced [NADPH--hemoprotein reductase] + O2 = 11-hydroxy-(9Z,12Z)-octadecadienoate + oxidized [NADPH--hemoprotein reductase] + H2O + H(+). Its pathway is cofactor metabolism; retinol metabolism. It participates in steroid metabolism; cholesterol metabolism. It functions in the pathway lipid metabolism; arachidonate metabolism. Its function is as follows. A cytochrome P450 monooxygenase involved in the metabolism of various endogenous substrates, including fatty acids, steroid hormones and vitamins. Mechanistically, uses molecular oxygen inserting one oxygen atom into a substrate, and reducing the second into a water molecule, with two electrons provided by NADPH via cytochrome P450 reductase (NADPH--hemoprotein reductase). Catalyzes the hydroxylation of carbon-hydrogen bonds. Exhibits high catalytic activity for the formation of hydroxyestrogens from estrone (E1) and 17beta-estradiol (E2), namely 2-hydroxy E1 and E2. Metabolizes cholesterol toward 25-hydroxycholesterol, a physiological regulator of cellular cholesterol homeostasis. May act as a major enzyme for all-trans retinoic acid biosynthesis in the liver. Catalyzes two successive oxidative transformation of all-trans retinol to all-trans retinal and then to the active form all-trans retinoic acid. Primarily catalyzes stereoselective epoxidation of the last double bond of polyunsaturated fatty acids (PUFA), displaying a strong preference for the (R,S) stereoisomer. Catalyzes bisallylic hydroxylation and omega-1 hydroxylation of PUFA. May also participate in eicosanoids metabolism by converting hydroperoxide species into oxo metabolites (lipoxygenase-like reaction, NADPH-independent). Plays a role in the oxidative metabolism of xenobiotics. Catalyzes the N-hydroxylation of heterocyclic amines and the O-deethylation of phenacetin. Metabolizes caffeine via N3-demethylation. In Mus musculus (Mouse), this protein is Cytochrome P450 1A2 (Cyp1a2).